Consider the following 511-residue polypeptide: MDPLQTAHAGPRKKRPRQTGASMASTPQDVRFQDLVLFILEKKMGSTRRTFLTELARRKGFRVENEFSDSVTHIVAENNSGSDVLEWLQVQKIKASSQLEVLDVSWLIECMRTGKPVETTGKHQLVARSDCSASPNPGPQKTPPLAVQKISQYACQRRTTLNNCNHVFTDAFEILAENYEFKENEGCAVTFLRAASVLKSLPFTIITMRDTEGIPCLEDKVKCIIEEIIEDGESSEVKAVLNDERYQSFKLFTSVFGVGLKTSEKWFRMGFRTLSKIRSDKSLTFTRMQRAGFHYYEDLVSCVTRAEAEAVSVLVKEAVWAFLPDAFVTMTGGFRRGKKIGHDVDFLITSPGSTEEEEEQLLHKVMNLWEKKGLLLYCDLVESTFEKLKLPSRKVDALDHFQKCFLILKLHHQRVVDSQKSSQQDGKTWKAIRVDLVMCPYERRAFALLGWTGSRQFERDLRRYATHERRMMLDNHGLWDKTKRIFLKAESEEEIFAHLGLDYIEPSERNA.

The segment at 1–26 (MDPLQTAHAGPRKKRPRQTGASMAST) is disordered. The short motif at 11-17 (PRKKRPR) is the Nuclear localization signal element. The BRCT domain occupies 27–124 (PQDVRFQDLV…KPVETTGKHQ (98 aa)). S134 carries the phosphoserine modification. The segment at 151–511 (SQYACQRRTT…DYIEPSERNA (361 aa)) is mediates interaction with DNTTIP2. The involved in DNA binding stretch occupies residues 258–262 (VGLKT). A 2'-deoxyribonucleoside 5'-triphosphate contacts are provided by residues 333–338 (GFRRGK) and 342–345 (HDVD). Positions 343, 345, and 435 each coordinate Mg(2+). 450-451 (GW) contributes to the a 2'-deoxyribonucleoside 5'-triphosphate binding site.

The protein belongs to the DNA polymerase type-X family. In terms of assembly, interacts with PRP19 and DNTTIP1. Forms a ternary complex with DNTTIP2 and core histone. Released from this complex by PCNA. Interacts with TRERF1. Mg(2+) serves as cofactor.

The protein localises to the nucleus. It catalyses the reaction DNA(n) + a 2'-deoxyribonucleoside 5'-triphosphate = DNA(n+1) + diphosphate. Functionally, template-independent DNA polymerase which catalyzes the random addition of deoxynucleoside 5'-triphosphate to the 3'-end of a DNA initiator. One of the in vivo functions of this enzyme is the addition of nucleotides at the junction (N region) of rearranged Ig heavy chain and T-cell receptor gene segments during the maturation of B- and T-cells. The chain is DNA nucleotidylexotransferase (DNTT) from Eulemur macaco (Black lemur).